A 206-amino-acid chain; its full sequence is Ribosomal RNA large subunit methyltransferase E (206 aa).

5 residues coordinate S-adenosyl-L-methionine: glycine 54, tryptophan 56, aspartate 76, aspartate 94, and aspartate 118. Lysine 158 acts as the Proton acceptor in catalysis.

Belongs to the class I-like SAM-binding methyltransferase superfamily. RNA methyltransferase RlmE family.

It is found in the cytoplasm. The catalysed reaction is uridine(2552) in 23S rRNA + S-adenosyl-L-methionine = 2'-O-methyluridine(2552) in 23S rRNA + S-adenosyl-L-homocysteine + H(+). Its function is as follows. Specifically methylates the uridine in position 2552 of 23S rRNA at the 2'-O position of the ribose in the fully assembled 50S ribosomal subunit. The polypeptide is Ribosomal RNA large subunit methyltransferase E (Methanosphaera stadtmanae (strain ATCC 43021 / DSM 3091 / JCM 11832 / MCB-3)).